The following is a 321-amino-acid chain: Lipoyl synthase (321 aa).

Residues Cys68, Cys73, Cys79, Cys94, Cys98, Cys101, and Ser308 each coordinate [4Fe-4S] cluster. Residues 80-297 (FNHGTATFMI…KALADELGFT (218 aa)) form the Radical SAM core domain.

Belongs to the radical SAM superfamily. Lipoyl synthase family. [4Fe-4S] cluster is required as a cofactor.

The protein localises to the cytoplasm. The enzyme catalyses [[Fe-S] cluster scaffold protein carrying a second [4Fe-4S](2+) cluster] + N(6)-octanoyl-L-lysyl-[protein] + 2 oxidized [2Fe-2S]-[ferredoxin] + 2 S-adenosyl-L-methionine + 4 H(+) = [[Fe-S] cluster scaffold protein] + N(6)-[(R)-dihydrolipoyl]-L-lysyl-[protein] + 4 Fe(3+) + 2 hydrogen sulfide + 2 5'-deoxyadenosine + 2 L-methionine + 2 reduced [2Fe-2S]-[ferredoxin]. Its pathway is protein modification; protein lipoylation via endogenous pathway; protein N(6)-(lipoyl)lysine from octanoyl-[acyl-carrier-protein]: step 2/2. Catalyzes the radical-mediated insertion of two sulfur atoms into the C-6 and C-8 positions of the octanoyl moiety bound to the lipoyl domains of lipoate-dependent enzymes, thereby converting the octanoylated domains into lipoylated derivatives. The polypeptide is Lipoyl synthase (Shewanella baltica (strain OS223)).